We begin with the raw amino-acid sequence, 405 residues long: L-rhamnonate dehydratase (405 aa).

Positions 33 and 59 each coordinate substrate. Asp-226, Glu-252, and Glu-280 together coordinate Mg(2+). His-329 functions as the Proton acceptor in the catalytic mechanism. Glu-349 contributes to the substrate binding site.

This sequence belongs to the mandelate racemase/muconate lactonizing enzyme family. RhamD subfamily. In terms of assembly, homooctamer; tetramer of dimers. The cofactor is Mg(2+).

The catalysed reaction is L-rhamnonate = 2-dehydro-3-deoxy-L-rhamnonate + H2O. Functionally, catalyzes the dehydration of L-rhamnonate to 2-keto-3-deoxy-L-rhamnonate (KDR). This Escherichia coli O9:H4 (strain HS) protein is L-rhamnonate dehydratase.